An 817-amino-acid chain; its full sequence is Probable beta-glucosidase G (817 aa).

The signal sequence occupies residues 1-20 (MASIAHLIFSGLLAATVANS). Asparagine 40, asparagine 58, asparagine 229, and asparagine 276 each carry an N-linked (GlcNAc...) asparagine glycan. Residue aspartate 304 is part of the active site. Residues asparagine 343, asparagine 350, asparagine 402, asparagine 507, asparagine 563, asparagine 584, asparagine 623, asparagine 662, asparagine 679, and asparagine 715 are each glycosylated (N-linked (GlcNAc...) asparagine).

It belongs to the glycosyl hydrolase 3 family.

It localises to the secreted. It carries out the reaction Hydrolysis of terminal, non-reducing beta-D-glucosyl residues with release of beta-D-glucose.. It functions in the pathway glycan metabolism; cellulose degradation. Its function is as follows. Beta-glucosidases are one of a number of cellulolytic enzymes involved in the degradation of cellulosic biomass. Catalyzes the last step releasing glucose from the inhibitory cellobiose. The sequence is that of Probable beta-glucosidase G (bglG) from Neosartorya fischeri (strain ATCC 1020 / DSM 3700 / CBS 544.65 / FGSC A1164 / JCM 1740 / NRRL 181 / WB 181) (Aspergillus fischerianus).